A 248-amino-acid chain; its full sequence is Sugar fermentation stimulation protein homolog (248 aa).

It belongs to the SfsA family.

The polypeptide is Sugar fermentation stimulation protein homolog (Methylorubrum extorquens (strain PA1) (Methylobacterium extorquens)).